Here is a 430-residue protein sequence, read N- to C-terminus: Rho GTPase-activating protein 2 (430 aa).

A disordered region spans residues 1–36; sequence MTGLVMMTKGGGCGGGGKGGRRKSTAEEEEEEEQNQ. Positions 9 to 18 are enriched in gly residues; it reads KGGGCGGGGK. Residues 80 to 93 enclose the CRIB domain; that stretch reads IGWPTNVRHITHVT. The 186-residue stretch at 125-310 folds into the Rho-GAP domain; that stretch reads VSAESMQCSY…TLAEREENAT (186 aa). The tract at residues 307 to 372 is disordered; that stretch reads ENATGSEGYS…HLSRHSTHED (66 aa). Low complexity predominate over residues 316–326; the sequence is SPSHSSNSQTD. Acidic residues predominate over residues 347–356; sequence ECGEEEEVEE. Positions 357-371 are enriched in basic and acidic residues; the sequence is VEQHQEHLSRHSTHE.

Homodimerizes via its Rho-GAP domain and forms a tetrameric complex (2:2) with ARAC1/ROP3, ARAC2/ROP7, ARAC4/ROP2, ARAC5/ROP4, ARAC7/ROP9 or ARAC11/ROP1.

Its function is as follows. Acts as a GTPase activator for the Rac-type GTPase by converting it to an inactive GDP-bound state. The polypeptide is Rho GTPase-activating protein 2 (ROPGAP2) (Arabidopsis thaliana (Mouse-ear cress)).